A 172-amino-acid polypeptide reads, in one-letter code: Protein GrpE (172 aa).

Residues 1-24 (MNQDHPEFDSEDLAQNPPETDPLK) are disordered.

It belongs to the GrpE family. As to quaternary structure, homodimer.

Its subcellular location is the cytoplasm. Its function is as follows. Participates actively in the response to hyperosmotic and heat shock by preventing the aggregation of stress-denatured proteins, in association with DnaK and GrpE. It is the nucleotide exchange factor for DnaK and may function as a thermosensor. Unfolded proteins bind initially to DnaJ; upon interaction with the DnaJ-bound protein, DnaK hydrolyzes its bound ATP, resulting in the formation of a stable complex. GrpE releases ADP from DnaK; ATP binding to DnaK triggers the release of the substrate protein, thus completing the reaction cycle. Several rounds of ATP-dependent interactions between DnaJ, DnaK and GrpE are required for fully efficient folding. This is Protein GrpE from Xanthomonas oryzae pv. oryzae (strain PXO99A).